A 130-amino-acid polypeptide reads, in one-letter code: Follitropin subunit beta (130 aa).

Positions 1 to 20 are cleaved as a signal peptide; sequence MMKSIQLCILLWCLRAVCCH. Cystine bridges form between C22–C70, C36–C85, C39–C123, C47–C101, C51–C103, and C106–C113. 2 N-linked (GlcNAc...) asparagine glycosylation sites follow: N26 and N43.

It belongs to the glycoprotein hormones subunit beta family. In terms of assembly, heterodimer. The active follitropin is a heterodimer composed of an alpha chain/CGA shared with other hormones and a unique beta chain/FSHB shown here.

The protein localises to the secreted. Functionally, together with the alpha chain CGA constitutes follitropin, the follicle-stimulating hormone, and provides its biological specificity to the hormone heterodimer. Binds FSHR, a G protein-coupled receptor, on target cells to activate downstream signaling pathways. Follitropin is involved in follicle development and spermatogenesis in reproductive organs. This is Follitropin subunit beta (Fshb) from Rattus norvegicus (Rat).